Reading from the N-terminus, the 401-residue chain is 8-amino-7-oxononanoate synthase (401 aa).

Arg-24 lines the substrate pocket. 111-112 (GF) contacts pyridoxal 5'-phosphate. A substrate-binding site is contributed by His-137. 3 residues coordinate pyridoxal 5'-phosphate: Ser-183, His-211, and Thr-240. An N6-(pyridoxal phosphate)lysine modification is found at Lys-243. Thr-357 is a substrate binding site.

It belongs to the class-II pyridoxal-phosphate-dependent aminotransferase family. BioF subfamily. As to quaternary structure, homodimer. Pyridoxal 5'-phosphate is required as a cofactor.

The enzyme catalyses 6-carboxyhexanoyl-[ACP] + L-alanine + H(+) = (8S)-8-amino-7-oxononanoate + holo-[ACP] + CO2. It functions in the pathway cofactor biosynthesis; biotin biosynthesis. In terms of biological role, catalyzes the decarboxylative condensation of pimeloyl-[acyl-carrier protein] and L-alanine to produce 8-amino-7-oxononanoate (AON), [acyl-carrier protein], and carbon dioxide. The chain is 8-amino-7-oxononanoate synthase from Xanthomonas euvesicatoria pv. vesicatoria (strain 85-10) (Xanthomonas campestris pv. vesicatoria).